The chain runs to 331 residues: GTP 3',8-cyclase 2 (331 aa).

Residues 9–234 (PFGRRITYLR…PSLARSGGPS (226 aa)) form the Radical SAM core domain. R18 is a GTP binding site. [4Fe-4S] cluster contacts are provided by C25 and C29. Y31 is an S-adenosyl-L-methionine binding site. Residue C32 participates in [4Fe-4S] cluster binding. A GTP-binding site is contributed by R67. G71 contributes to the S-adenosyl-L-methionine binding site. T98 is a GTP binding site. S122 provides a ligand contact to S-adenosyl-L-methionine. K159 is a binding site for GTP. M193 provides a ligand contact to S-adenosyl-L-methionine. [4Fe-4S] cluster is bound by residues C257 and C260. 262–264 (RVR) contributes to the GTP binding site. Residue C274 participates in [4Fe-4S] cluster binding.

This sequence belongs to the radical SAM superfamily. MoaA family. Monomer and homodimer. Requires [4Fe-4S] cluster as cofactor.

It carries out the reaction GTP + AH2 + S-adenosyl-L-methionine = (8S)-3',8-cyclo-7,8-dihydroguanosine 5'-triphosphate + 5'-deoxyadenosine + L-methionine + A + H(+). It participates in cofactor biosynthesis; molybdopterin biosynthesis. Functionally, catalyzes the cyclization of GTP to (8S)-3',8-cyclo-7,8-dihydroguanosine 5'-triphosphate. The chain is GTP 3',8-cyclase 2 (moaA2) from Pseudomonas aeruginosa (strain ATCC 15692 / DSM 22644 / CIP 104116 / JCM 14847 / LMG 12228 / 1C / PRS 101 / PAO1).